The chain runs to 775 residues: Armadillo-like helical domain-containing protein 4 (775 aa).

A signal peptide spans M1–A47. Over F48–M715 the chain is Extracellular. N76 carries an N-linked (GlcNAc...) asparagine glycan. Disordered stretches follow at residues A120–S148, V247–S273, and K324–T366. Over residues G129–E142 the composition is skewed to polar residues. The segment covering K324 to E335 has biased composition (basic and acidic residues). A glycan (N-linked (GlcNAc...) asparagine) is linked at N476. The tract at residues I559 to I669 is disordered. Residues T577 to A599 are compositionally biased toward polar residues. Over residues L606 to E640 the composition is skewed to acidic residues. The chain crosses the membrane as a helical span at residues L716–I736. Residues K737–F775 lie on the Cytoplasmic side of the membrane. Phosphoserine occurs at positions 770 and 771.

In terms of assembly, interacts with IL6ST; this interaction prevents IL6ST protein homodimerization and bridges ARMH4 with IL6R and STAT3 and therefore inhibits phosphorylation of STAT3 at 'Tyr-705'. Interacts (via cytoplasmic tail) with RICTOR; this interaction bridges ARMH4 to the mTORC2 complex and inhibits the mTORC2 kinase activity. Expressed in bone-marroew cells.

The protein localises to the membrane. May modulate immune response and may play a role in inflammation. Down-modulates STAT3 signaling throught direct interaction with IL6ST, resulting in the inhibition of phosphorylation of STAT3 at 'Tyr-705'. May negatively regulates AKT signaling by modulating the activity of mTORC2 complex through RICTOR interaction. This chain is Armadillo-like helical domain-containing protein 4, found in Mus musculus (Mouse).